We begin with the raw amino-acid sequence, 2947 residues long: 3'-5' exoribonuclease HELZ2 (2947 aa).

A C3H1-type 1 zinc finger spans residues 85–114 (PMRYQVCHYYRPGLGCRRHWNRCTFARSPE). The C2H2-type zinc finger occupies 167–187 (CFTCCPPCLCPVDPRGHCPKH). Residues 221 to 245 (YCMYVGRGVPCRHGASRCEYAHSAV) form a C3H1-type 2 zinc finger. The C2H2-type; atypical zinc finger occupies 289-311 (CHACLVTCNSQEAFENHCSSLEH). The UvrD-like helicase ATP-binding domain maps to 769–1317 (VGLIAGRRPE…ELLDESQQVT (549 aa)). 790 to 797 (GPFGTGKT) provides a ligand contact to ATP. Residues 809–1290 (QQPHTKVLIC…GGMSEEDSES (482 aa)) are interaction with THRAP3. Positions 913–916 (DEAA) match the DEAA box motif. Positions 1260–1292 (EDTASGNSASRDAAAEVSTLEGGMSEEDSESDF) are disordered. 4 short sequence motifs (LXXLL motif) span residues 1306 to 1310 (LKELL), 1348 to 1352 (LWKFL), 1403 to 1407 (LVQIL), and 2240 to 2244 (LEGLP). Residue R2381 is modified to Omega-N-methylarginine. Residues 2413–2947 (PEPCRGNWPR…RVQRKSALSS (535 aa)) form an interaction with THRAP3 region. The region spanning 2449–2726 (LNQSQDRAVR…IMLDTQYRMH (278 aa)) is the UvrD-like helicase ATP-binding 2 domain. Position 2470 to 2477 (2470 to 2477 (GPPGTGKT)) interacts with ATP. The LXXLL motif 5 signature appears at 2525 to 2529 (LGGLL).

It belongs to the DNA2/NAM7 helicase family. As to quaternary structure, interacts with PPARA (via DNA-binding domain) and PPARG; the interaction stimulates the transcriptional activity of PPARA and PPARG. Interacts with THRAP3; the interaction is direct and HELZ2 and THRAP3 synergistically enhance the transcriptional activity of PPARG. It is probably part of the peroxisome proliferator activated receptor alpha interacting complex (PRIC).

It is found in the cytoplasm. It carries out the reaction Exonucleolytic cleavage in the 3'- to 5'-direction to yield nucleoside 5'-phosphates.. The enzyme catalyses ATP + H2O = ADP + phosphate + H(+). Its function is as follows. Can degrade highly structured RNAs through its concerted ATP-dependent RNA helicase and 3' to 5' exoribonuclease activities. Shows a strong preference for pyrimidine over purine residues for its nuclease activity. Acts as a transcriptional coactivator for a number of nuclear receptors including PPARA, PPARG, THRA, THRB and RXRA. This Mus musculus (Mouse) protein is 3'-5' exoribonuclease HELZ2 (Helz2).